The following is a 197-amino-acid chain: Short chain dehydrogenase ausX (197 aa).

4 residues coordinate NADP(+): I49, D95, R157, and Y189. Y189 serves as the catalytic Proton acceptor. The Proton donor role is filled by Y189.

It belongs to the short-chain dehydrogenases/reductases (SDR) family.

The protein operates within secondary metabolite biosynthesis; terpenoid biosynthesis. Short chain dehydrogenase; part of the gene cluster A that mediates the biosynthesis of austinol and dehydroaustinol, two fungal meroterpenoids. The first step of the pathway is the synthesis of 3,5-dimethylorsellinic acid by the polyketide synthase ausA. 3,5-dimethylorsellinic acid is then prenylated by the polyprenyl transferase ausN. Further epoxidation by the FAD-dependent monooxygenase ausM and cyclization by the probable terpene cyclase ausL lead to the formation of protoaustinoid A. Protoaustinoid A is then oxidized to spiro-lactone preaustinoid A3 by the combined action of the FAD-binding monooxygenases ausB and ausC, and the dioxygenase ausE. Acid-catalyzed keto-rearrangement and ring contraction of the tetraketide portion of preaustinoid A3 by ausJ lead to the formation of preaustinoid A4. The aldo-keto reductase ausK, with the help of ausH, is involved in the next step by transforming preaustinoid A4 into isoaustinone which is in turn hydroxylated by the P450 monooxygenase ausI to form austinolide. Finally, the cytochrome P450 monooxygenase ausG modifies austinolide to austinol. Austinol can be further modified to dehydroaustinol which forms a diffusible complex with diorcinol that initiates conidiation. Due to genetic rearrangements of the clusters and the subsequent loss of some enzymes, the end products of the Emericella nidulans austinoid biosynthesis clusters are austinol and dehydroaustinol, even if additional enzymes, such as the O-acetyltransferase ausQ and the cytochrome P450 monooxygenase ausR are still functional. The polypeptide is Short chain dehydrogenase ausX (Emericella nidulans (strain FGSC A4 / ATCC 38163 / CBS 112.46 / NRRL 194 / M139) (Aspergillus nidulans)).